A 1027-amino-acid chain; its full sequence is Circadian locomoter output cycles protein kaput (1027 aa).

Positions 15 to 65 constitute a bHLH domain; it reads LCRKSRNLSEKKRRDQFNSLVNDLSALISTSSRKMDKSTVLKSTIAFLKNH. PAS domains are found at residues 88–160 and 255–321; these read NDEY…VIEP and REMS…ELRQ. 5 disordered regions span residues 377 to 402, 443 to 575, 765 to 800, 869 to 911, and 926 to 1027; these read RKEG…ASTG, TSPA…QQLQ, QQMM…TQQQ, TINP…NNED, and SINF…GSSQ. The span at 383–402 shows a compositional bias: low complexity; that stretch reads SGNSNSITNNGSSKVIASTG. Polar residues predominate over residues 443–486; the sequence is TSPAVDSSPMWSASAVQPSGSCQINPLKTSRPASSYGNISSTGI. Low complexity-rich tracts occupy residues 504–516 and 552–575; these read SDST…SVTS and QQQQ…QQLQ. Residues 780–1027 form an implicated in the circadian rhythmicity region; it reads QHNLQQQHQS…SPHTAPGSSQ (248 aa). Low complexity-rich tracts occupy residues 871 to 909 and 951 to 995; these read NPFN…QNNN and SGSN…NQNQ. Residues 1006 to 1027 show a composition bias toward polar residues; that stretch reads QMSQEQSQNLFNSPHTAPGSSQ.

Efficient DNA binding requires dimerization with another bHLH protein. Forms a heterodimer with Cycle. Widely expressed. Found in head, body, and appendage fractions.

The protein localises to the nucleus. Its function is as follows. Circadian regulator that acts as a transcription factor and generates a rhythmic output with a period of about 24 hours. Oscillates in antiphase to the cycling observed for period (PER) and timeless (TIM). According to PubMed:9742131, reaches peak abundance within several hours of the dark-light transition at ZT0 (zeitgeber 0), whereas PubMed:9616122 describes bimodal oscillating expression with maximum at ZT5 and ZT23. Clock-cycle heterodimers activate cycling transcription of PER and TIM by binding to the E-box (5'-CACGTG-3') present in their promoters. Once induced, Period and Timeless block Clock's ability to transactivate their promoters. In Drosophila melanogaster (Fruit fly), this protein is Circadian locomoter output cycles protein kaput (Clk).